We begin with the raw amino-acid sequence, 783 residues long: MDQEMVTKETEKYIELPLLASRGVVVFPHMVIPLLVGREKSIEALEKAMVKDKEIIILSQKDEKIEDPDPEDLYTIGTIAEVKQLVKLPNGMLKVVVEGIKRARIIDFIEIDEYFEVRAEILDQTVPEVDLEMKALMKAVLNKFQEYIKYNRNLPSETIMTVTNIEEPARFSDTIASHLELKFRQEQDLLEAISIKERLNKLLEIIKDEIEILKVEQKIQKKVRKQVEKTQKEYYLREQLKAIKEELDEDEEDDEIEEYRNKAEELDLPEKIREKVDKEIEKLKKTPSMSPEATVIRNYLDCVLDLPWNKVREEKIDLDEAKNVLDSEHYGLEDVKERILEYLAVRKLAPQKKSPILCLIGAPGVGKTSLGRSIARALGRDFVRLSLGGVRDEAEIRGHRRTYIGSRPGRIINAMREAGSKNPVFLLDEVDKMSSDFRGDPAAALLEVLDPEQNNEFTDHYLELPFDLSKVLFVTTANVAYPIPAPLLDRMEVIELPGYTEDEKVEIALRHLIPRILNEHGLTEDEIHFSSNSIYRIIREYTREAGVRNLERKLAAITRKVSKEIVEGRGRQARVTTQSIEKYLGVPKFKYEKAQKKDRVGVATGMAYTQTGGDILDIEVAVVPGKGKLTLTGSLGDVMKESARAALSYIRSKQEELGLSDNFHEEYDLHVHVPKGATPKDGPSAGITIASAIASALTGQPVKGKYAMTGEVTLRGRVLPVGGIKTKIMAARRAGLKDIIMPEENKKDFEEIPVKIKKDIRVNFVNHMDQVLDLILGGDEDEN.

Residues 16-210 form the Lon N-terminal domain; the sequence is LPLLASRGVV…KLLEIIKDEI (195 aa). Residue 361 to 368 participates in ATP binding; sequence GAPGVGKT. Residues 597-778 enclose the Lon proteolytic domain; the sequence is KDRVGVATGM…DQVLDLILGG (182 aa). Active-site residues include Ser-684 and Lys-727.

It belongs to the peptidase S16 family. Homohexamer. Organized in a ring with a central cavity.

Its subcellular location is the cytoplasm. The catalysed reaction is Hydrolysis of proteins in presence of ATP.. Its function is as follows. ATP-dependent serine protease that mediates the selective degradation of mutant and abnormal proteins as well as certain short-lived regulatory proteins. Required for cellular homeostasis and for survival from DNA damage and developmental changes induced by stress. Degrades polypeptides processively to yield small peptide fragments that are 5 to 10 amino acids long. Binds to DNA in a double-stranded, site-specific manner. This chain is Lon protease, found in Halothermothrix orenii (strain H 168 / OCM 544 / DSM 9562).